The following is a 131-amino-acid chain: D-ribose pyranase (131 aa).

Residue His20 is the Proton donor of the active site. Residues Asp28, His98, and 120–122 (YAN) each bind substrate.

It belongs to the RbsD / FucU family. RbsD subfamily. Homodecamer.

It is found in the cytoplasm. It catalyses the reaction beta-D-ribopyranose = beta-D-ribofuranose. Its pathway is carbohydrate metabolism; D-ribose degradation; D-ribose 5-phosphate from beta-D-ribopyranose: step 1/2. Functionally, catalyzes the interconversion of beta-pyran and beta-furan forms of D-ribose. In Bacillus cereus (strain G9842), this protein is D-ribose pyranase.